A 287-amino-acid polypeptide reads, in one-letter code: RNA polymerase sigma factor RpoH (287 aa).

Residues 54-123 (LILSHLRFVI…IHEYVLRNWR (70 aa)) form a sigma-70 factor domain-2 region. The short motif at 78–81 (DLIQ) is the Interaction with polymerase core subunit RpoC element. Positions 230-283 (ALSSLDERSRNIIHARWLDDSDHKMTLREIAHNYGISAERVRQLEKNAMKKLKV) are sigma-70 factor domain-4. The H-T-H motif DNA-binding region spans 256 to 275 (LREIAHNYGISAERVRQLEK).

This sequence belongs to the sigma-70 factor family. RpoH subfamily. In terms of assembly, interacts with the RNA polymerase core enzyme.

Its subcellular location is the cytoplasm. Functionally, sigma factors are initiation factors that promote the attachment of RNA polymerase to specific initiation sites and are then released. This sigma factor is involved in regulation of expression of heat shock genes. The protein is RNA polymerase sigma factor RpoH of Buchnera aphidicola subsp. Baizongia pistaciae (strain Bp).